Reading from the N-terminus, the 342-residue chain is Probable receptor-like protein kinase At4g10390 (342 aa).

The Protein kinase domain maps to 41-336 (SNFSRLIGSG…IKEIPSLSFL (296 aa)). ATP is bound by residues 47-55 (IGSGGYSSI) and Lys69. Asp165 acts as the Proton acceptor in catalysis. Phosphoserine occurs at positions 169 and 201. Tyr220 bears the Phosphotyrosine mark.

The protein belongs to the protein kinase superfamily. Ser/Thr protein kinase family.

The enzyme catalyses L-seryl-[protein] + ATP = O-phospho-L-seryl-[protein] + ADP + H(+). It carries out the reaction L-threonyl-[protein] + ATP = O-phospho-L-threonyl-[protein] + ADP + H(+). The protein is Probable receptor-like protein kinase At4g10390 of Arabidopsis thaliana (Mouse-ear cress).